Consider the following 225-residue polypeptide: U2 small nuclear ribonucleoprotein B'' (225 aa).

One can recognise an RRM 1 domain in the interval 7 to 86 (HTIYINNMND…KPMRIQYAKT (80 aa)). Positions 99–145 (ADKEKKKEKKKAKTVEQTATTTNKKPGQGTPNSANTQGNSTPNPQVP) are disordered. An N6-acetyllysine; alternate modification is found at lysine 111. A Glycyl lysine isopeptide (Lys-Gly) (interchain with G-Cter in SUMO2); alternate cross-link involves residue lysine 111. Residues 113 to 123 (VEQTATTTNKK) show a composition bias toward low complexity. Positions 127–141 (GTPNSANTQGNSTPN) are enriched in polar residues. Tyrosine 151 carries the phosphotyrosine modification. The RRM 2 domain maps to 151-225 (YILFLNNLPE…HAMKITYAKK (75 aa)).

This sequence belongs to the RRM U1 A/B'' family. As to quaternary structure, identified in the spliceosome B complex. Identified in the spliceosome C complex. Present in a spliceosome complex assembled in vitro, and composed of SNRPB2, HPRP8BP and CRNKL1. Contributes to the binding of stem loop IV of U2 snRNA with SNRPP1.

It localises to the nucleus. Involved in pre-mRNA splicing as component of the spliceosome. Associated with sn-RNP U2, where it contributes to the binding of stem loop IV of U2 snRNA. In Homo sapiens (Human), this protein is U2 small nuclear ribonucleoprotein B'' (SNRPB2).